The sequence spans 286 residues: 2-dehydro-3-deoxyphosphooctonate aldolase (286 aa).

Belongs to the KdsA family.

It is found in the cytoplasm. It carries out the reaction D-arabinose 5-phosphate + phosphoenolpyruvate + H2O = 3-deoxy-alpha-D-manno-2-octulosonate-8-phosphate + phosphate. The protein operates within carbohydrate biosynthesis; 3-deoxy-D-manno-octulosonate biosynthesis; 3-deoxy-D-manno-octulosonate from D-ribulose 5-phosphate: step 2/3. It functions in the pathway bacterial outer membrane biogenesis; lipopolysaccharide biosynthesis. This chain is 2-dehydro-3-deoxyphosphooctonate aldolase, found in Bradyrhizobium sp. (strain BTAi1 / ATCC BAA-1182).